The chain runs to 506 residues: Trans-cinnamate 4-monooxygenase C4H1 (506 aa).

2 consecutive short sequence motifs (nuclear localization signal) follow at residues 161 to 168 (VKKMPESA) and 247 to 254 (QRRLQLFK). Residue C448 participates in heme binding.

This sequence belongs to the cytochrome P450 family. Heme serves as cofactor.

It localises to the nucleus. It catalyses the reaction (E)-cinnamate + reduced [NADPH--hemoprotein reductase] + O2 = (E)-4-coumarate + oxidized [NADPH--hemoprotein reductase] + H2O + H(+). It functions in the pathway phenylpropanoid metabolism; trans-4-coumarate biosynthesis; trans-4-coumarate from trans-cinnamate: step 1/1. Its function is as follows. Component of the floral volatile benzenoid/phenylpropanoid (FVBP) biosynthetic pathway that controls carbon flux to pigments essential for pollination or UV protection, to numerous pytoalexins synthesized by plants when challenged by pathogens, and to lignins. The sequence is that of Trans-cinnamate 4-monooxygenase C4H1 from Petunia hybrida (Petunia).